The primary structure comprises 311 residues: Small ribosomal subunit biogenesis GTPase RsgA (311 aa).

The 159-residue stretch at 88–246 (SKEKEQVIAA…VIDTPGIREF (159 aa)) folds into the CP-type G domain. GTP contacts are provided by residues 137–140 (NKID) and 188–196 (GHSGVGKST). Residues Cys270, Cys275, His277, and Cys283 each coordinate Zn(2+).

It belongs to the TRAFAC class YlqF/YawG GTPase family. RsgA subfamily. Monomer. Associates with 30S ribosomal subunit, binds 16S rRNA. Zn(2+) serves as cofactor.

The protein resides in the cytoplasm. In terms of biological role, one of several proteins that assist in the late maturation steps of the functional core of the 30S ribosomal subunit. Helps release RbfA from mature subunits. May play a role in the assembly of ribosomal proteins into the subunit. Circularly permuted GTPase that catalyzes slow GTP hydrolysis, GTPase activity is stimulated by the 30S ribosomal subunit. The chain is Small ribosomal subunit biogenesis GTPase RsgA from Chlorobaculum parvum (strain DSM 263 / NCIMB 8327) (Chlorobium vibrioforme subsp. thiosulfatophilum).